A 251-amino-acid polypeptide reads, in one-letter code: uncharacterized protein (251 aa).

Residues 3 to 118 enclose the Response regulatory domain; it reads KVIICDDERI…QLEHILDILV (116 aa). The residue at position 55 (D55) is a 4-aspartylphosphate. One can recognise an HTH araC/xylS-type domain in the interval 152–249; it reads NQILSQIKQH…HMSPSDYNKQ (98 aa). 2 DNA-binding regions (H-T-H motif) span residues 169–190 and 216–239; these read LDLI…KEHV and HYEI…KKYL.

In terms of processing, phosphorylated by SERP2405.

The protein resides in the cytoplasm. Its function is as follows. Probable member of the two-component regulatory system SERP2405/SERP2406. This is an uncharacterized protein from Staphylococcus epidermidis (strain ATCC 35984 / DSM 28319 / BCRC 17069 / CCUG 31568 / BM 3577 / RP62A).